The primary structure comprises 271 residues: MSEQRVTFNGDTRVLYRQAVRTPLPNEDAERLFHENMMNIADAQERKADMLADPDISLLEAYETQLEGIAKSYKRRCRHIAGDDYEEIAMAYNRGARDDRVGALTAYYFEGLWRMQQRITVTDMLFFPIILRYPDCFTVNIRFASGHTTTESVLYESPEHSTEELDDEYAERYYNESLYSQKEAAEYIRDTAEIIREEFPSPDESTFEERQYGGITSAGGRKGPVFSSMLKRVEPDPNRFSEPVDQPTLVEEGKEARRTERELLPEGAIVL.

The interval 233 to 261 (VEPDPNRFSEPVDQPTLVEEGKEARRTER) is disordered. Positions 251–261 (EEGKEARRTER) are enriched in basic and acidic residues.

Functionally, may be involved in swimming motility. This is an uncharacterized protein from Haloferax volcanii (strain ATCC 29605 / DSM 3757 / JCM 8879 / NBRC 14742 / NCIMB 2012 / VKM B-1768 / DS2) (Halobacterium volcanii).